The following is a 262-amino-acid chain: Malonyl-[acyl-carrier protein] O-methyltransferase (262 aa).

This sequence belongs to the methyltransferase superfamily.

The catalysed reaction is malonyl-[ACP] + S-adenosyl-L-methionine = malonyl-[ACP] methyl ester + S-adenosyl-L-homocysteine. It participates in cofactor biosynthesis; biotin biosynthesis. Its function is as follows. Converts the free carboxyl group of a malonyl-thioester to its methyl ester by transfer of a methyl group from S-adenosyl-L-methionine (SAM). It allows to synthesize pimeloyl-ACP via the fatty acid synthetic pathway. The sequence is that of Malonyl-[acyl-carrier protein] O-methyltransferase from Erwinia pyrifoliae (strain DSM 12163 / CIP 106111 / Ep16/96).